A 188-amino-acid polypeptide reads, in one-letter code: Pyridoxal 5'-phosphate synthase subunit PdxT (188 aa).

47–49 (GES) provides a ligand contact to L-glutamine. C79 functions as the Nucleophile in the catalytic mechanism. L-glutamine is bound by residues R105 and 134–135 (IR). Catalysis depends on charge relay system residues H170 and E172.

This sequence belongs to the glutaminase PdxT/SNO family. As to quaternary structure, in the presence of PdxS, forms a dodecamer of heterodimers. Only shows activity in the heterodimer.

It catalyses the reaction aldehydo-D-ribose 5-phosphate + D-glyceraldehyde 3-phosphate + L-glutamine = pyridoxal 5'-phosphate + L-glutamate + phosphate + 3 H2O + H(+). The enzyme catalyses L-glutamine + H2O = L-glutamate + NH4(+). It functions in the pathway cofactor biosynthesis; pyridoxal 5'-phosphate biosynthesis. Its function is as follows. Catalyzes the hydrolysis of glutamine to glutamate and ammonia as part of the biosynthesis of pyridoxal 5'-phosphate. The resulting ammonia molecule is channeled to the active site of PdxS. This is Pyridoxal 5'-phosphate synthase subunit PdxT from Listeria monocytogenes serotype 4b (strain CLIP80459).